The primary structure comprises 670 residues: Probable urocanate hydratase (670 aa).

NAD(+)-binding positions include 126-127 (GG), Gln204, 250-252 (GMS), Glu270, 316-317 (NV), 338-342 (QTSLH), 349-350 (FY), Tyr398, and Gly590.

It belongs to the urocanase family. Requires NAD(+) as cofactor.

The enzyme catalyses 4-imidazolone-5-propanoate = trans-urocanate + H2O. The protein operates within amino-acid degradation; L-histidine degradation into L-glutamate; N-formimidoyl-L-glutamate from L-histidine: step 2/3. This chain is Probable urocanate hydratase, found in Caenorhabditis elegans.